A 200-amino-acid polypeptide reads, in one-letter code: MASHQDQASYRAGETKAHTEEKAGQVMGASKDKASEAKDRASEAAGHAAGKGQDTKEATKEKAQAAKERASETAQAAKDKTSGTAQAARDKAAESKDQTGGFLGEKTEQAKQKAAETAGAAKQKTAETAQYTKDSAIAGKDKTGSVLQQASEQVKSTVVGAKDAVMSTLGMTEDKAGTDDGANKDTSATAAATETTARDH.

Disordered stretches follow at residues 1 to 158 (MASH…KSTV) and 172 to 200 (TEDK…ARDH). Basic and acidic residues-rich tracts occupy residues 13-23 (GETKAHTEEKA), 30-42 (SKDK…DRAS), 53-81 (QDTK…KDKT), 88-97 (ARDKAAESKD), and 105-114 (EKTEQAKQKA). Positions 52 to 81 (GQDTKEATKEKAQAAKERASETAQAAKDKT) form a coiled coil. The span at 115–130 (AETAGAAKQKTAETAQ) shows a compositional bias: low complexity. Over residues 145-156 (SVLQQASEQVKS) the composition is skewed to polar residues. A compositionally biased stretch (basic and acidic residues) spans 172–183 (TEDKAGTDDGAN). A compositionally biased stretch (low complexity) spans 186 to 200 (TSATAAATETTARDH).

Belongs to the LEA type 4 family. As to expression, expressed in the shoot apex and leaves.

Functionally, involved in response to drought stress. This Oryza sativa subsp. indica (Rice) protein is Late embryogenesis abundant protein 19.